The chain runs to 408 residues: Putative glutamate--cysteine ligase 2 (408 aa).

The protein belongs to the glutamate--cysteine ligase type 2 family. YbdK subfamily.

It catalyses the reaction L-cysteine + L-glutamate + ATP = gamma-L-glutamyl-L-cysteine + ADP + phosphate + H(+). Functionally, ATP-dependent carboxylate-amine ligase which exhibits weak glutamate--cysteine ligase activity. This Bradyrhizobium sp. (strain BTAi1 / ATCC BAA-1182) protein is Putative glutamate--cysteine ligase 2.